A 308-amino-acid chain; its full sequence is Oxygen-dependent coproporphyrinogen-III oxidase (308 aa).

Ser97 serves as a coordination point for substrate. A divalent metal cation is bound by residues His101 and His111. The active-site Proton donor is His111. 113-115 is a binding site for substrate; that stretch reads NVR. Residues His153 and His183 each contribute to the a divalent metal cation site. The tract at residues 248–283 is important for dimerization; the sequence is YVEFNLVWDRGTHFGLQSGGRTESILMSMPPLASWS. 266–268 lines the substrate pocket; that stretch reads GGR.

This sequence belongs to the aerobic coproporphyrinogen-III oxidase family. As to quaternary structure, homodimer. Requires a divalent metal cation as cofactor.

Its subcellular location is the cytoplasm. The catalysed reaction is coproporphyrinogen III + O2 + 2 H(+) = protoporphyrinogen IX + 2 CO2 + 2 H2O. It participates in porphyrin-containing compound metabolism; protoporphyrin-IX biosynthesis; protoporphyrinogen-IX from coproporphyrinogen-III (O2 route): step 1/1. Functionally, involved in the heme biosynthesis. Catalyzes the aerobic oxidative decarboxylation of propionate groups of rings A and B of coproporphyrinogen-III to yield the vinyl groups in protoporphyrinogen-IX. This is Oxygen-dependent coproporphyrinogen-III oxidase from Polaromonas sp. (strain JS666 / ATCC BAA-500).